Here is a 244-residue protein sequence, read N- to C-terminus: MSSIDKKELEKFEKISHNWWNKDGEFGILHRINPIRLEYIIEKITSHYNDISKLEILDVGCGGGLIATPLAAQGFNVTAIDALQSNIETASTYAKENGVKVNYLQSTIEELQSDKLYDVVICLEVIEHVENVQQFILNLVGHIKPNGMAIISTINRTKKAYVLGIIVAEYVLGWVPKNTHDYSKFLKPSEIYEMLTDTDIEIKELKGLVYDPAKNEWKLSNDIDVNYFMCLGRKTNRHCKEITK.

S-adenosyl-L-methionine contacts are provided by R36, G60, D81, and L123.

This sequence belongs to the methyltransferase superfamily. UbiG/COQ3 family.

It catalyses the reaction a 3-demethylubiquinol + S-adenosyl-L-methionine = a ubiquinol + S-adenosyl-L-homocysteine + H(+). The enzyme catalyses a 3-(all-trans-polyprenyl)benzene-1,2-diol + S-adenosyl-L-methionine = a 2-methoxy-6-(all-trans-polyprenyl)phenol + S-adenosyl-L-homocysteine + H(+). Its pathway is cofactor biosynthesis; ubiquinone biosynthesis. O-methyltransferase that catalyzes the 2 O-methylation steps in the ubiquinone biosynthetic pathway. This Rickettsia felis (strain ATCC VR-1525 / URRWXCal2) (Rickettsia azadi) protein is Ubiquinone biosynthesis O-methyltransferase.